A 339-amino-acid polypeptide reads, in one-letter code: Proto-oncogene serine/threonine-protein kinase mos (339 aa).

Positions 61–335 (VCLLHRLGSG…LLQKDLKAFR (275 aa)) constitute a Protein kinase domain. Residues 67–75 (LGSGGFGSV) and K88 contribute to the ATP site. The active-site Proton acceptor is the D196.

It belongs to the protein kinase superfamily. Ser/Thr protein kinase family. As to quaternary structure, interacts with MAP2K1/MEK1. In terms of tissue distribution, expressed mainly in gonadal tissues, and cardiac and skeletal muscles.

The protein localises to the cytoplasm. It catalyses the reaction L-seryl-[protein] + ATP = O-phospho-L-seryl-[protein] + ADP + H(+). It carries out the reaction L-threonyl-[protein] + ATP = O-phospho-L-threonyl-[protein] + ADP + H(+). Serine/threonine kinase involved in the regulation of MAPK signaling. Is an activator of the ERK1/2 signaling cascade playing an essential role in the stimulation of oocyte maturation. This chain is Proto-oncogene serine/threonine-protein kinase mos, found in Rattus norvegicus (Rat).